The primary structure comprises 265 residues: Energy-coupling factor transporter transmembrane protein EcfT (265 aa).

The next 6 helical transmembrane spans lie at 26 to 46, 47 to 67, 72 to 92, 107 to 127, 152 to 172, and 243 to 263; these read MVFVFIMMILIFLMNNWQTYA, VGIILIFIILKASNLSFMFLF, PILFLLIFTLLMHIFLTKGGA, VIMGIMISLRFILIIFLTTIM, LPVHELALMMSIALRFIPTLM, and HTYDTLSLLTLIPITLLILYL.

Belongs to the energy-coupling factor EcfT family. As to quaternary structure, forms a stable energy-coupling factor (ECF) transporter complex composed of 2 membrane-embedded substrate-binding proteins (S component), 2 ATP-binding proteins (A component) and 2 transmembrane proteins (T component). May be able to interact with more than 1 S component at a time.

It is found in the cell membrane. In terms of biological role, transmembrane (T) component of an energy-coupling factor (ECF) ABC-transporter complex. Unlike classic ABC transporters this ECF transporter provides the energy necessary to transport a number of different substrates. The protein is Energy-coupling factor transporter transmembrane protein EcfT of Macrococcus caseolyticus (strain JCSC5402) (Macrococcoides caseolyticum).